Reading from the N-terminus, the 293-residue chain is Elongation factor Ts (293 aa).

Positions Thr-80–Val-83 are involved in Mg(2+) ion dislocation from EF-Tu.

It belongs to the EF-Ts family.

The protein resides in the cytoplasm. Associates with the EF-Tu.GDP complex and induces the exchange of GDP to GTP. It remains bound to the aminoacyl-tRNA.EF-Tu.GTP complex up to the GTP hydrolysis stage on the ribosome. In Aeromonas salmonicida (strain A449), this protein is Elongation factor Ts.